Reading from the N-terminus, the 178-residue chain is Actin-related protein 2/3 complex subunit 3 (178 aa).

K29 participates in a covalent cross-link: Glycyl lysine isopeptide (Lys-Gly) (interchain with G-Cter in ubiquitin).

This sequence belongs to the ARPC3 family. Component of the Arp2/3 complex composed of ARP2, ARP3, ARC40/p41-ARC, ARC35/p34-ARC, ARC18/p21-ARC, ARC19/p20-ARC and ARC16/p16-ARC.

Its subcellular location is the cytoplasm. It is found in the cytoskeleton. In terms of biological role, functions as a component of the Arp2/3 complex which is involved in regulation of actin polymerization and together with an activating nucleation-promoting factor (NPF) mediates the formation of branched actin networks. This chain is Actin-related protein 2/3 complex subunit 3 (ARC18), found in Saccharomyces cerevisiae (strain ATCC 204508 / S288c) (Baker's yeast).